The following is a 455-amino-acid chain: Pre-mRNA-processing factor 17 (455 aa).

Positions M1–D89 are disordered. Basic and acidic residues predominate over residues D18 to T35. The span at I44–R63 shows a compositional bias: basic residues. WD repeat units follow at residues G160–R200, G204–R243, H291–Q330, T334–P373, G379–K422, and P424–C454.

As to quaternary structure, belongs to the CWC complex (or CEF1-associated complex), a spliceosome sub-complex reminiscent of a late-stage spliceosome composed of the U2, U5 and U6 snRNAs and at least BUD13, BUD31, BRR2, CDC40, CEF1, CLF1, CUS1, CWC2, CWC15, CWC21, CWC22, CWC23, CWC24, CWC25, CWC27, ECM2, HSH155, IST3, ISY1, LEA1, MSL1, NTC20, PRP8, PRP9, PRP11, PRP19, PRP21, PRP22, PRP45, PRP46, SLU7, SMB1, SMD1, SMD2, SMD3, SMX2, SMX3, SNT309, SNU114, SPP2, SYF1, SYF2, RSE1 and YJU2.

It is found in the nucleus. Functionally, may function in the second step of pre-mRNA splicing. Regulatory protein involved in replication and mitotic spindle formation and/or maintenance. Required for initiation and completion of S-phase and for initiation and completion of DNA replication. Might be required for the maintenance of microtubules. Essential only at elevated temperatures. This is Pre-mRNA-processing factor 17 (CDC40) from Saccharomyces cerevisiae (strain ATCC 204508 / S288c) (Baker's yeast).